Consider the following 802-residue polypeptide: Osmosensitive cation channel TMEM63C (802 aa).

Residues 1-35 (MTASPESMGQKFRNMTANECFQSRSTVLQGQPFGG) are Extracellular-facing. The chain crosses the membrane as a helical span at residues 36–60 (IPTVLLLNIILWVCVVLVYSFLRKA). Residues 61 to 124 (AWDYGRLALL…RDRDLINKCG (64 aa)) lie on the Cytoplasmic side of the membrane. A phosphoserine mark is found at S75 and S78. A helical transmembrane segment spans residues 125–157 (EDARIYIMFQYHLIIFVLILCIPSLGIILPVNY). Topologically, residues 158-180 (IGSALDWSSHFGRTTIVNVSTES) are extracellular. A helical transmembrane segment spans residues 181–205 (QFLWLHSIFAFMYFLTNFAFMGHHC). Over 206–401 (LGFVPKKNLH…IIWKHLSIRR (196 aa)) the chain is Cytoplasmic. Residues 402–431 (FSWWARFIAINTSLFFLFFFLTTPAIIINT) form a helical membrane-spanning segment. Residues 432-446 (IDMYNVTRPIEKLQS) lie on the Extracellular side of the membrane. A helical membrane pass occupies residues 447–476 (PVVTQFFPSVLLWAFTVIMPLLVYFSAFLE). The Cytoplasmic portion of the chain corresponds to 477–480 (AHWT). The helical transmembrane segment at 481 to 517 (RSNQNLIIMYKCYIFLVFMVVILPSMGLTSLDVFLRW) threads the bilayer. Residues 518–540 (LFDIYYLEHATIRFQCVFLPDNG) lie on the Extracellular side of the membrane. The helical transmembrane segment at 541-573 (AFFINYVITSALFGTGMELMRLGSLCTYCTRLF) threads the bilayer. At 574-593 (LSRSEPERVHIRKNLAMDFQ) the chain is on the cytoplasmic side. A helical transmembrane segment spans residues 594 to 612 (FGREYAWMLNVFSVVMAYS). Residues 613–615 (ITC) are Extracellular-facing. A helical transmembrane segment spans residues 616–640 (PIIVPFGLLYLCMKHITDRYNMYYS). Topologically, residues 641–647 (YAPTKLN) are cytoplasmic. The chain crosses the membrane as a helical span at residues 648-676 (AQIHMAAVYQAIFAPLLGLFWMLFFSILR). At 677–681 (VGSLH) the chain is on the extracellular side. A helical membrane pass occupies residues 682–702 (SITLFSLSSIIISVIIAFSGV). Residues 703 to 802 (FLGKFRIAQQ…EGLELEGQSH (100 aa)) are Cytoplasmic-facing. Residues 753–785 (TPASSPARHTYGTMNSQPEEGEEESGLRGFARE) form a disordered region.

The protein belongs to the CSC1 (TC 1.A.17) family. Monomer. In terms of tissue distribution, expressed in podocytes of kidney glomeruli.

It is found in the endoplasmic reticulum membrane. Its subcellular location is the cell membrane. It catalyses the reaction Ca(2+)(in) = Ca(2+)(out). In terms of biological role, acts as an osmosensitive cation channel preferentially activated upon hypotonic stress. In contrast to TMEM63B, does not show phospholipid scramblase activity. Enriched in mitochondria-ER contact sites where it may regulate the metabolite flux and organelles' morphologies in response to osmotic changes. In particular may regulate mitochondrial motility and function in motor neuron axons. Required for the functional integrity of the kidney glomerular filtration barrier. In Rattus norvegicus (Rat), this protein is Osmosensitive cation channel TMEM63C (Tmem63c).